The chain runs to 214 residues: A-type ATP synthase subunit D (214 aa).

The protein belongs to the V-ATPase D subunit family. Has multiple subunits with at least A(3), B(3), C, D, E, F, H, I and proteolipid K(x).

Its subcellular location is the cell membrane. Functionally, component of the A-type ATP synthase that produces ATP from ADP in the presence of a proton gradient across the membrane. This chain is A-type ATP synthase subunit D, found in Pyrococcus furiosus (strain ATCC 43587 / DSM 3638 / JCM 8422 / Vc1).